Consider the following 406-residue polypeptide: Tyrosine--tRNA ligase (406 aa).

Tyr-35 is an L-tyrosine binding site. Residues 40 to 49 carry the 'HIGH' region motif; it reads PTADSLHVGH. Tyr-168 and Gln-172 together coordinate L-tyrosine. A 'KMSKS' region motif is present at residues 228–232; it reads KMGKT. Lys-231 contacts ATP. The 65-residue stretch at 340–404 folds into the S4 RNA-binding domain; the sequence is LPILDVMAST…RGKKNYNKIE (65 aa).

This sequence belongs to the class-I aminoacyl-tRNA synthetase family. TyrS type 1 subfamily. As to quaternary structure, homodimer.

It localises to the cytoplasm. The catalysed reaction is tRNA(Tyr) + L-tyrosine + ATP = L-tyrosyl-tRNA(Tyr) + AMP + diphosphate + H(+). Functionally, catalyzes the attachment of tyrosine to tRNA(Tyr) in a two-step reaction: tyrosine is first activated by ATP to form Tyr-AMP and then transferred to the acceptor end of tRNA(Tyr). The chain is Tyrosine--tRNA ligase from Clostridium beijerinckii (strain ATCC 51743 / NCIMB 8052) (Clostridium acetobutylicum).